The following is a 240-amino-acid chain: 1-(5-phosphoribosyl)-5-[(5-phosphoribosylamino)methylideneamino] imidazole-4-carboxamide isomerase (240 aa).

Asp-8 (proton acceptor) is an active-site residue. Asp-129 acts as the Proton donor in catalysis.

This sequence belongs to the HisA/HisF family.

Its subcellular location is the cytoplasm. The catalysed reaction is 1-(5-phospho-beta-D-ribosyl)-5-[(5-phospho-beta-D-ribosylamino)methylideneamino]imidazole-4-carboxamide = 5-[(5-phospho-1-deoxy-D-ribulos-1-ylimino)methylamino]-1-(5-phospho-beta-D-ribosyl)imidazole-4-carboxamide. The protein operates within amino-acid biosynthesis; L-histidine biosynthesis; L-histidine from 5-phospho-alpha-D-ribose 1-diphosphate: step 4/9. The sequence is that of 1-(5-phosphoribosyl)-5-[(5-phosphoribosylamino)methylideneamino] imidazole-4-carboxamide isomerase from Oceanobacillus iheyensis (strain DSM 14371 / CIP 107618 / JCM 11309 / KCTC 3954 / HTE831).